Reading from the N-terminus, the 180-residue chain is NADH-quinone oxidoreductase subunit I (180 aa).

2 consecutive 4Fe-4S ferredoxin-type domains span residues 50–80 (LTRD…LQKA) and 90–119 (EFFR…LTPD). 8 residues coordinate [4Fe-4S] cluster: Cys60, Cys63, Cys66, Cys70, Cys99, Cys102, Cys105, and Cys109.

It belongs to the complex I 23 kDa subunit family. As to quaternary structure, NDH-1 is composed of 13 different subunits. Subunits NuoA, H, J, K, L, M, N constitute the membrane sector of the complex. Requires [4Fe-4S] cluster as cofactor.

It localises to the cell inner membrane. The enzyme catalyses a quinone + NADH + 5 H(+)(in) = a quinol + NAD(+) + 4 H(+)(out). Functionally, NDH-1 shuttles electrons from NADH, via FMN and iron-sulfur (Fe-S) centers, to quinones in the respiratory chain. The immediate electron acceptor for the enzyme in this species is believed to be ubiquinone. Couples the redox reaction to proton translocation (for every two electrons transferred, four hydrogen ions are translocated across the cytoplasmic membrane), and thus conserves the redox energy in a proton gradient. The protein is NADH-quinone oxidoreductase subunit I of Shigella boydii serotype 4 (strain Sb227).